A 191-amino-acid chain; its full sequence is MSIEFINESGYDGVNEEMLIDVCSYALGCLDVNPDAECTITAVDLDTIADLHVRWMDLEGPTDVMSFPMDELTPGASAGRPDAVEAGPAMLGDIVLCPEFAQRQATAAGHSLGHELALLTVHGCLHLLGYDHTTAAEEKEMFGLQNELLADWYEDLAARGVSYQPKPSGPKAFPDAAERAELDKEVPGGGI.

His-122, His-126, and His-132 together coordinate Zn(2+). Residues 164 to 191 (QPKPSGPKAFPDAAERAELDKEVPGGGI) are disordered. Over residues 176-191 (AAERAELDKEVPGGGI) the composition is skewed to basic and acidic residues.

Belongs to the endoribonuclease YbeY family. Zn(2+) serves as cofactor.

It is found in the cytoplasm. Its function is as follows. Single strand-specific metallo-endoribonuclease involved in late-stage 70S ribosome quality control and in maturation of the 3' terminus of the 16S rRNA. The protein is Endoribonuclease YbeY of Corynebacterium aurimucosum (strain ATCC 700975 / DSM 44827 / CIP 107346 / CN-1) (Corynebacterium nigricans).